A 97-amino-acid chain; its full sequence is Co-chaperonin GroES (97 aa).

Belongs to the GroES chaperonin family. In terms of assembly, heptamer of 7 subunits arranged in a ring. Interacts with the chaperonin GroEL.

It localises to the cytoplasm. Together with the chaperonin GroEL, plays an essential role in assisting protein folding. The GroEL-GroES system forms a nano-cage that allows encapsulation of the non-native substrate proteins and provides a physical environment optimized to promote and accelerate protein folding. GroES binds to the apical surface of the GroEL ring, thereby capping the opening of the GroEL channel. This chain is Co-chaperonin GroES, found in Nocardioides sp. (strain ATCC BAA-499 / JS614).